The chain runs to 620 residues: Eukaryotic translation initiation factor 2-alpha kinase 1 (620 aa).

Positions methionine 1–tyrosine 38 are disordered. A compositionally biased stretch (low complexity) spans alanine 18–aspartate 28. An SIFI-degron motif is present at residues leucine 85 to leucine 104. Positions phenylalanine 167–phenylalanine 581 constitute a Protein kinase domain. ATP is bound by residues leucine 173 to valine 181 and lysine 196. Threonine 283 is subject to Phosphothreonine. An HRM 1 repeat occupies alanine 408–methionine 413. Aspartate 440 functions as the Proton acceptor in the catalytic mechanism. A phosphothreonine; by autocatalysis mark is found at threonine 484 and threonine 486. The residue at position 491 (threonine 491) is a Phosphothreonine. One copy of the HRM 2 repeat lies at arginine 550–alanine 555.

Belongs to the protein kinase superfamily. Ser/Thr protein kinase family. GCN2 subfamily. As to quaternary structure, synthesized in an inactive form that binds to the N-terminal domain of CDC37. Has to be associated with a multiprotein complex containing Hsp90, CDC37 and PPP5C for maturation and activation by autophosphorylation. The phosphatase PPP5C modulates this activation. Homodimer; homodimerizes in presence of heme, forming a disulfide-linked inactive homodimer. Interacts with DELE1; binds both to full-length DELE1 and processed form of DELE1 (S-DELE1) in response to stress, leading to activate its protein kinase activity and trigger the integrated stress response (ISR). Activated by autophosphorylation; phosphorylated predominantly on serine and threonine residues, but also on tyrosine residues. Autophosphorylation at Thr-486 is required for kinase activation. The active autophosphorylated form apparently is largely refractory to cellular heme fluctuations. Post-translationally, ubiquitinated and degraded by the SIFI complex once the mitochondrial stress has been resolved, thereby providing stress response silencing. Within the SIFI complex, UBR4 initiates ubiquitin chain that are further elongated or branched by KCMF1.

Its subcellular location is the cytoplasm. The enzyme catalyses L-seryl-[protein] + ATP = O-phospho-L-seryl-[protein] + ADP + H(+). The catalysed reaction is L-threonyl-[protein] + ATP = O-phospho-L-threonyl-[protein] + ADP + H(+). With respect to regulation, in normal conditions, the protein kinase activity is inhibited; inhibition is relieved by various stress conditions. Inhibited by heme: in presence of heme, forms a disulfide-linked inactive homodimer. Heme depletion relieves inhibition and stimulates kinase activity by autophosphorylation. Inhibited by the heme metabolites biliverdin and bilirubin. Induced by oxidative stress generated by arsenite treatment. Binding of nitric oxide (NO) to the heme iron in the N-terminal heme-binding domain activates the kinase activity, while binding of carbon monoxide (CO) suppresses kinase activity. Protein kinase activity is also activated upon binding to DELE1 in response to various stress, triggering the integrated stress response (ISR): activated by full-length DELE1 in response to iron deficiency, while it is activated by the processed form of DELE1 (S-DELE1) in response to mitochondrial stress. In terms of biological role, metabolic-stress sensing protein kinase that phosphorylates the alpha subunit of eukaryotic translation initiation factor 2 (EIF2S1/eIF-2-alpha) in response to various stress conditions. Key activator of the integrated stress response (ISR) required for adaptation to various stress, such as heme deficiency, oxidative stress, osmotic shock, mitochondrial dysfunction and heat shock. EIF2S1/eIF-2-alpha phosphorylation in response to stress converts EIF2S1/eIF-2-alpha in a global protein synthesis inhibitor, leading to a global attenuation of cap-dependent translation, while concomitantly initiating the preferential translation of ISR-specific mRNAs, such as the transcriptional activator ATF4, and hence allowing ATF4-mediated reprogramming. Acts as a key sensor of heme-deficiency: in normal conditions, binds hemin via a cysteine thiolate and histidine nitrogenous coordination, leading to inhibit the protein kinase activity. This binding occurs with moderate affinity, allowing it to sense the heme concentration within the cell: heme depletion relieves inhibition and stimulates kinase activity, activating the ISR. Thanks to this unique heme-sensing capacity, plays a crucial role to shut off protein synthesis during acute heme-deficient conditions. In red blood cells (RBCs), controls hemoglobin synthesis ensuring a coordinated regulation of the synthesis of its heme and globin moieties. It thereby plays an essential protective role for RBC survival in anemias of iron deficiency. Iron deficiency also triggers activation by full-length DELE1. Also activates the ISR in response to mitochondrial dysfunction: HRI/EIF2AK1 protein kinase activity is activated upon binding to the processed form of DELE1 (S-DELE1), thereby promoting the ATF4-mediated reprogramming. Also acts as an activator of mitophagy in response to mitochondrial damage: catalyzes phosphorylation of eIF-2-alpha (EIF2S1) following activation by S-DELE1, thereby promoting mitochondrial localization of EIF2S1, triggering PRKN-independent mitophagy. The protein is Eukaryotic translation initiation factor 2-alpha kinase 1 of Rattus norvegicus (Rat).